Consider the following 692-residue polypeptide: Elongation factor G (692 aa).

In terms of domain architecture, tr-type G spans Glu-8–Leu-282. Residues Ala-17 to Thr-24, Asp-81 to His-85, and Asn-135 to Asp-138 contribute to the GTP site.

The protein belongs to the TRAFAC class translation factor GTPase superfamily. Classic translation factor GTPase family. EF-G/EF-2 subfamily.

The protein resides in the cytoplasm. In terms of biological role, catalyzes the GTP-dependent ribosomal translocation step during translation elongation. During this step, the ribosome changes from the pre-translocational (PRE) to the post-translocational (POST) state as the newly formed A-site-bound peptidyl-tRNA and P-site-bound deacylated tRNA move to the P and E sites, respectively. Catalyzes the coordinated movement of the two tRNA molecules, the mRNA and conformational changes in the ribosome. The sequence is that of Elongation factor G from Bacillus anthracis (strain CDC 684 / NRRL 3495).